A 90-amino-acid polypeptide reads, in one-letter code: Small ribosomal subunit protein bS18 (90 aa).

This sequence belongs to the bacterial ribosomal protein bS18 family. In terms of assembly, part of the 30S ribosomal subunit. Forms a tight heterodimer with protein bS6.

Its function is as follows. Binds as a heterodimer with protein bS6 to the central domain of the 16S rRNA, where it helps stabilize the platform of the 30S subunit. This is Small ribosomal subunit protein bS18 from Porphyromonas gingivalis (strain ATCC 33277 / DSM 20709 / CIP 103683 / JCM 12257 / NCTC 11834 / 2561).